The following is a 78-amino-acid chain: Gas vesicle protein G (78 aa).

It belongs to the gas vesicle GvpG family.

The protein resides in the gas vesicle. Its function is as follows. Might be a minor component of the gas vesicle involved in nucleating their formation. Gas vesicles are hollow, gas filled proteinaceous nanostructures found in some microorganisms. It is not clear what function gas vesicles perform in soil bacteria. The chain is Gas vesicle protein G from Streptomyces sp. (strain CB03234).